The sequence spans 275 residues: NAD kinase (275 aa).

Residue aspartate 53 is the Proton acceptor of the active site. NAD(+) is bound by residues 53-54 (DG), 129-130 (NE), arginine 155, aspartate 157, and 168-173 (TAYNKS).

Belongs to the NAD kinase family. It depends on a divalent metal cation as a cofactor.

The protein localises to the cytoplasm. The catalysed reaction is NAD(+) + ATP = ADP + NADP(+) + H(+). In terms of biological role, involved in the regulation of the intracellular balance of NAD and NADP, and is a key enzyme in the biosynthesis of NADP. Catalyzes specifically the phosphorylation on 2'-hydroxyl of the adenosine moiety of NAD to yield NADP. This is NAD kinase from Streptococcus agalactiae serotype Ia (strain ATCC 27591 / A909 / CDC SS700).